The sequence spans 423 residues: COP9 signalosome complex subunit 3 (423 aa).

Ala2 bears the N-acetylalanine mark. A PCI domain is found at Asn197–Glu365. The disordered stretch occupies residues Gln402–Ser423. 3 positions are modified to phosphoserine: Ser407, Ser410, and Ser423.

Belongs to the CSN3 family. As to quaternary structure, component of the CSN complex, composed of COPS1/GPS1, COPS2, COPS3, COPS4, COPS5, COPS6, COPS7 (COPS7A or COPS7B), COPS8 and COPS9. In the complex, it probably interacts directly with COPS1, COPS4, COPS8 and COPS9. Interacts with CK2 and PKD. Interacts with the translation initiation factor EIF3S6 and IKBKG. Interacts with ERCC6.

The protein resides in the cytoplasm. It localises to the nucleus. In terms of biological role, component of the COP9 signalosome complex (CSN), a complex involved in various cellular and developmental processes. The CSN complex is an essential regulator of the ubiquitin (Ubl) conjugation pathway by mediating the deneddylation of the cullin subunits of SCF-type E3 ligase complexes, leading to decrease the Ubl ligase activity of SCF-type complexes such as SCF, CSA or DDB2. The complex is also involved in phosphorylation of p53/TP53, c-jun/JUN, IkappaBalpha/NFKBIA, ITPK1 and IRF8/ICSBP, possibly via its association with CK2 and PKD kinases. CSN-dependent phosphorylation of TP53 and JUN promotes and protects degradation by the Ubl system, respectively. Essential to maintain the survival of epiblast cells and thus the development of the postimplantation embryo. The protein is COP9 signalosome complex subunit 3 (Cops3) of Rattus norvegicus (Rat).